Consider the following 268-residue polypeptide: MIAAFQSPGATLELGFITLRWYGLLIAVAVFIGIWLSQRLARQRQIDPEQIADLSIWLVVAAIPAARLYYVAFNWGFYQKHLDQVVQIWKGGIAIHGAILGGIVAMAIFTYVQRLSFWQVADVVAPSLILGQAIGRWGNFFNSEAFGAPTDLPWKLYIPVPQRPPELINTAYYHPTFLYESLWNVGVFLLLLWLFRQPRYQKPGTLLMVYAIAYSLGRFWIEGLRMDSLMLGPLRIAQVVSLVAIALGSWGLFRLYYQGKPLPDWQTP.

Transmembrane regions (helical) follow at residues 16–36, 56–76, and 92–112; these read FITLRWYGLLIAVAVFIGIWL, IWLVVAAIPAARLYYVAFNWG, and GIAIHGAILGGIVAMAIFTYV. R136 contacts a 1,2-diacyl-sn-glycero-3-phospho-(1'-sn-glycerol). A run of 3 helical transmembrane segments spans residues 175-195, 204-224, and 236-256; these read PTFLYESLWNVGVFLLLLWLF, GTLLMVYAIAYSLGRFWIEGL, and IAQVVSLVAIALGSWGLFRLY.

It belongs to the Lgt family.

Its subcellular location is the cell inner membrane. The enzyme catalyses L-cysteinyl-[prolipoprotein] + a 1,2-diacyl-sn-glycero-3-phospho-(1'-sn-glycerol) = an S-1,2-diacyl-sn-glyceryl-L-cysteinyl-[prolipoprotein] + sn-glycerol 1-phosphate + H(+). It functions in the pathway protein modification; lipoprotein biosynthesis (diacylglyceryl transfer). Catalyzes the transfer of the diacylglyceryl group from phosphatidylglycerol to the sulfhydryl group of the N-terminal cysteine of a prolipoprotein, the first step in the formation of mature lipoproteins. This is Phosphatidylglycerol--prolipoprotein diacylglyceryl transferase from Thermosynechococcus vestitus (strain NIES-2133 / IAM M-273 / BP-1).